We begin with the raw amino-acid sequence, 327 residues long: Methionyl-tRNA formyltransferase (327 aa).

Ser121 to Pro124 serves as a coordination point for (6S)-5,6,7,8-tetrahydrofolate.

Belongs to the Fmt family.

It catalyses the reaction L-methionyl-tRNA(fMet) + (6R)-10-formyltetrahydrofolate = N-formyl-L-methionyl-tRNA(fMet) + (6S)-5,6,7,8-tetrahydrofolate + H(+). Functionally, attaches a formyl group to the free amino group of methionyl-tRNA(fMet). The formyl group appears to play a dual role in the initiator identity of N-formylmethionyl-tRNA by promoting its recognition by IF2 and preventing the misappropriation of this tRNA by the elongation apparatus. The sequence is that of Methionyl-tRNA formyltransferase from Burkholderia vietnamiensis (strain G4 / LMG 22486) (Burkholderia cepacia (strain R1808)).